The chain runs to 252 residues: Probable phosphatase Shewmr4_2619 (252 aa).

Histidine 8, histidine 10, histidine 16, histidine 41, glutamate 74, histidine 102, histidine 132, aspartate 193, and histidine 195 together coordinate Zn(2+).

The protein belongs to the PHP family. It depends on Zn(2+) as a cofactor.

This is Probable phosphatase Shewmr4_2619 from Shewanella sp. (strain MR-4).